We begin with the raw amino-acid sequence, 332 residues long: Phosphate acyltransferase (332 aa).

It belongs to the PlsX family. As to quaternary structure, homodimer. Probably interacts with PlsY.

It is found in the cytoplasm. The catalysed reaction is a fatty acyl-[ACP] + phosphate = an acyl phosphate + holo-[ACP]. The protein operates within lipid metabolism; phospholipid metabolism. In terms of biological role, catalyzes the reversible formation of acyl-phosphate (acyl-PO(4)) from acyl-[acyl-carrier-protein] (acyl-ACP). This enzyme utilizes acyl-ACP as fatty acyl donor, but not acyl-CoA. The sequence is that of Phosphate acyltransferase from Thermoanaerobacter pseudethanolicus (strain ATCC 33223 / 39E) (Clostridium thermohydrosulfuricum).